Here is an 806-residue protein sequence, read N- to C-terminus: Glycerol-3-phosphate acyltransferase (806 aa).

The short motif at 305–310 (CHRSHM) is the HXXXXD motif element.

It belongs to the GPAT/DAPAT family.

The protein localises to the cell inner membrane. It catalyses the reaction sn-glycerol 3-phosphate + an acyl-CoA = a 1-acyl-sn-glycero-3-phosphate + CoA. It participates in phospholipid metabolism; CDP-diacylglycerol biosynthesis; CDP-diacylglycerol from sn-glycerol 3-phosphate: step 1/3. This chain is Glycerol-3-phosphate acyltransferase, found in Salmonella paratyphi B (strain ATCC BAA-1250 / SPB7).